Here is a 193-residue protein sequence, read N- to C-terminus: uncharacterized protein (193 aa).

This is an uncharacterized protein from Dictyostelium discoideum (Social amoeba).